The primary structure comprises 155 residues: Ribonuclease H (155 aa).

One can recognise an RNase H type-1 domain in the interval M1–M142. Mg(2+)-binding residues include D10, E48, D70, and D134.

It belongs to the RNase H family. As to quaternary structure, monomer. The cofactor is Mg(2+).

The protein resides in the cytoplasm. It catalyses the reaction Endonucleolytic cleavage to 5'-phosphomonoester.. Functionally, endonuclease that specifically degrades the RNA of RNA-DNA hybrids. The chain is Ribonuclease H from Enterobacter sp. (strain 638).